Consider the following 492-residue polypeptide: N-succinylglutamate 5-semialdehyde dehydrogenase (492 aa).

Position 220–225 (220–225) interacts with NAD(+); sequence GSANTG. Residues E243 and C277 contribute to the active site.

Belongs to the aldehyde dehydrogenase family. AstD subfamily.

The enzyme catalyses N-succinyl-L-glutamate 5-semialdehyde + NAD(+) + H2O = N-succinyl-L-glutamate + NADH + 2 H(+). It participates in amino-acid degradation; L-arginine degradation via AST pathway; L-glutamate and succinate from L-arginine: step 4/5. In terms of biological role, catalyzes the NAD-dependent reduction of succinylglutamate semialdehyde into succinylglutamate. This Escherichia fergusonii (strain ATCC 35469 / DSM 13698 / CCUG 18766 / IAM 14443 / JCM 21226 / LMG 7866 / NBRC 102419 / NCTC 12128 / CDC 0568-73) protein is N-succinylglutamate 5-semialdehyde dehydrogenase.